The following is a 596-amino-acid chain: MKHIRNFSIIAHIDHGKSTLSDRLIQVCGGLTDREMQKQVLDSMDIERERGITIKAQSVTLNYKANDGEIYQLNFIDTPGHVDFTYEVSRSLAACEGALLVVDAGQGVEAQTLANCYTAIEMNLEVIPVLNKIDLPQADPLRVAEEIEDIIGIDALDAVQCSAKTGVGIAEVLEMIVKDVPPPVGDKDAPLQALIIDSWFDPYQGVVSLVRIKHGELRAGDKIKIMSNDHVHTADQVGVFTPKQTNTGILRTGEVGFVIAGIKEIHGAPVGDTITHQKNAAPLRLPGFQKIKPQVYAGMFPIASDEYESFRDALNKLSLNDASLFFEPENSTALGFGFRCGFLGMLHMEIIQERLEREYDIDLITTAPTVIYEVVTKKDGTFQIDNPSDLPAVNDILEIREPIVEANILVPQEYLGSVITLCVDKRGMQTKMSYHGKQVAVTYELPMAEVVMDFFDKLKSTSRGFASLDYNFKHFQTSDMVRVDILINSERVDALAIIAHRDSAQSRGRQLADALKELIPRQMFDIAIQAAIGGHVIARTTIKQMRKNVIAKCYGGDVSRKKKLLKKQKDGKKRMKQVGNVEVPQEAFLAILKVGK.

In terms of domain architecture, tr-type G spans 2-184 (KHIRNFSIIA…MIVKDVPPPV (183 aa)). Residues 14–19 (DHGKST) and 131–134 (NKID) each bind GTP.

This sequence belongs to the TRAFAC class translation factor GTPase superfamily. Classic translation factor GTPase family. LepA subfamily.

The protein localises to the cell inner membrane. It carries out the reaction GTP + H2O = GDP + phosphate + H(+). Functionally, required for accurate and efficient protein synthesis under certain stress conditions. May act as a fidelity factor of the translation reaction, by catalyzing a one-codon backward translocation of tRNAs on improperly translocated ribosomes. Back-translocation proceeds from a post-translocation (POST) complex to a pre-translocation (PRE) complex, thus giving elongation factor G a second chance to translocate the tRNAs correctly. Binds to ribosomes in a GTP-dependent manner. The protein is Elongation factor 4 of Pseudoalteromonas translucida (strain TAC 125).